We begin with the raw amino-acid sequence, 291 residues long: Acetyl-coenzyme A carboxylase carboxyl transferase subunit beta (291 aa).

The region spanning 23-291 is the CoA carboxyltransferase N-terminal domain; it reads VYTKDPVSGE…TPASASVAKS (269 aa).

The protein belongs to the AccD/PCCB family. Acetyl-CoA carboxylase is a heterohexamer composed of biotin carboxyl carrier protein (AccB), biotin carboxylase (AccC) and two subunits each of ACCase subunit alpha (AccA) and ACCase subunit beta (AccD).

It is found in the cytoplasm. It catalyses the reaction N(6)-carboxybiotinyl-L-lysyl-[protein] + acetyl-CoA = N(6)-biotinyl-L-lysyl-[protein] + malonyl-CoA. It participates in lipid metabolism; malonyl-CoA biosynthesis; malonyl-CoA from acetyl-CoA: step 1/1. Its function is as follows. Component of the acetyl coenzyme A carboxylase (ACC) complex. Biotin carboxylase (BC) catalyzes the carboxylation of biotin on its carrier protein (BCCP) and then the CO(2) group is transferred by the transcarboxylase to acetyl-CoA to form malonyl-CoA. The sequence is that of Acetyl-coenzyme A carboxylase carboxyl transferase subunit beta from Opitutus terrae (strain DSM 11246 / JCM 15787 / PB90-1).